The chain runs to 88 residues: DNA-directed RNA polymerase subunit omega (88 aa).

The protein belongs to the RNA polymerase subunit omega family. The RNAP catalytic core consists of 2 alpha, 1 beta, 1 beta' and 1 omega subunit. When a sigma factor is associated with the core the holoenzyme is formed, which can initiate transcription.

The enzyme catalyses RNA(n) + a ribonucleoside 5'-triphosphate = RNA(n+1) + diphosphate. Promotes RNA polymerase assembly. Latches the N- and C-terminal regions of the beta' subunit thereby facilitating its interaction with the beta and alpha subunits. This Kineococcus radiotolerans (strain ATCC BAA-149 / DSM 14245 / SRS30216) protein is DNA-directed RNA polymerase subunit omega.